Here is a 115-residue protein sequence, read N- to C-terminus: U3-lycotoxin-Ls1s (115 aa).

Residues 1–20 form the signal peptide; it reads MKFVLLFGVFLLTLFSYSSS. The propeptide occupies 21 to 44; the sequence is EMLDDFDQADEDELLSLIEKEEAR. Intrachain disulfides connect cysteine 48-cysteine 63, cysteine 55-cysteine 72, cysteine 62-cysteine 87, and cysteine 74-cysteine 85.

The protein belongs to the neurotoxin 19 (CSTX) family. 01 subfamily. Expressed by the venom gland.

It is found in the secreted. The protein is U3-lycotoxin-Ls1s of Lycosa singoriensis (Wolf spider).